The following is a 440-amino-acid chain: Xaa-Pro dipeptidase (440 aa).

Positions 244, 255, 335, 380, and 419 each coordinate Mn(2+).

The protein belongs to the peptidase M24B family. Bacterial-type prolidase subfamily. It depends on Mn(2+) as a cofactor.

It catalyses the reaction Xaa-L-Pro dipeptide + H2O = an L-alpha-amino acid + L-proline. Its function is as follows. Splits dipeptides with a prolyl residue in the C-terminal position. This Shewanella putrefaciens (strain CN-32 / ATCC BAA-453) protein is Xaa-Pro dipeptidase.